A 638-amino-acid chain; its full sequence is Chaperone protein DnaK 2 (638 aa).

T199 bears the Phosphothreonine; by autocatalysis mark. The segment at 604–626 (AKEQAQSAPEGAQEADAAPADDV) is disordered. Low complexity predominate over residues 613–624 (EGAQEADAAPAD).

This sequence belongs to the heat shock protein 70 family.

Functionally, acts as a chaperone. The chain is Chaperone protein DnaK 2 from Colwellia psychrerythraea (strain 34H / ATCC BAA-681) (Vibrio psychroerythus).